Here is a 343-residue protein sequence, read N- to C-terminus: D-erythrose-4-phosphate dehydrogenase (343 aa).

An NAD(+)-binding site is contributed by arginine 12–isoleucine 13. Substrate contacts are provided by residues serine 154–threonine 156, arginine 200, threonine 213–lysine 214, and arginine 236. Cysteine 155 functions as the Nucleophile in the catalytic mechanism. Asparagine 318 provides a ligand contact to NAD(+).

This sequence belongs to the glyceraldehyde-3-phosphate dehydrogenase family. Epd subfamily. As to quaternary structure, homotetramer.

It localises to the cytoplasm. It carries out the reaction D-erythrose 4-phosphate + NAD(+) + H2O = 4-phospho-D-erythronate + NADH + 2 H(+). It participates in cofactor biosynthesis; pyridoxine 5'-phosphate biosynthesis; pyridoxine 5'-phosphate from D-erythrose 4-phosphate: step 1/5. In terms of biological role, catalyzes the NAD-dependent conversion of D-erythrose 4-phosphate to 4-phosphoerythronate. The chain is D-erythrose-4-phosphate dehydrogenase from Pseudoalteromonas translucida (strain TAC 125).